The following is a 48-amino-acid chain: uncharacterized protein (48 aa).

The disordered stretch occupies residues 1–20; it reads MLLKNWPSRRIQRDKSKRAG.

This is an uncharacterized protein from Bacillus subtilis (strain 168).